We begin with the raw amino-acid sequence, 360 residues long: MKSSIVAKLEALYERHEEVQALLGDAATIADQDKFRALSREYAQLSDVARCYTDWRQVQEDIETAQMMLDDPEMREMAQEELRDAKEKGDQLEQQLQVLLLPKDPDDERNAFVEVRAGTGGDEAALFAGDLFRMYTRYAESRRWQVEILSANEGEHGGFKEVIAKISGDGVYGRLKFESGGHRVQRVPATESQGRIHTSACTVAVMPELPEAEMPDINPADLRIDTFRSSGAGGQHVNTTDSAIRITHLPTGIVVECQDERSQHKNKAKALSVLGARIRAAEVAKRQQAEASTRRNLLGSGDRSDRNRTYNFPQGRVTDHRINLTLYRLDEAMEGKLDMLIEPIVQEHQADQLAALSEQE.

The residue at position 235 (Q235) is an N5-methylglutamine. The interval 285–314 (KRQQAEASTRRNLLGSGDRSDRNRTYNFPQ) is disordered.

Belongs to the prokaryotic/mitochondrial release factor family. In terms of processing, methylated by PrmC. Methylation increases the termination efficiency of RF1.

It localises to the cytoplasm. Its function is as follows. Peptide chain release factor 1 directs the termination of translation in response to the peptide chain termination codons UAG and UAA. In Klebsiella pneumoniae subsp. pneumoniae (strain ATCC 700721 / MGH 78578), this protein is Peptide chain release factor 1.